Reading from the N-terminus, the 309-residue chain is Homoserine kinase (309 aa).

An ATP-binding site is contributed by 91–101; it reads PIGSGLGSSAC.

This sequence belongs to the GHMP kinase family. Homoserine kinase subfamily.

The protein localises to the cytoplasm. The catalysed reaction is L-homoserine + ATP = O-phospho-L-homoserine + ADP + H(+). Its pathway is amino-acid biosynthesis; L-threonine biosynthesis; L-threonine from L-aspartate: step 4/5. Its function is as follows. Catalyzes the ATP-dependent phosphorylation of L-homoserine to L-homoserine phosphate. In Erwinia tasmaniensis (strain DSM 17950 / CFBP 7177 / CIP 109463 / NCPPB 4357 / Et1/99), this protein is Homoserine kinase.